A 231-amino-acid chain; its full sequence is Biosynthetic peptidoglycan transglycosylase (231 aa).

The helical transmembrane segment at 12–32 (LLAAFALLLLWQVWLFAQVAW) threads the bilayer.

The protein belongs to the glycosyltransferase 51 family.

It localises to the cell inner membrane. The enzyme catalyses [GlcNAc-(1-&gt;4)-Mur2Ac(oyl-L-Ala-gamma-D-Glu-L-Lys-D-Ala-D-Ala)](n)-di-trans,octa-cis-undecaprenyl diphosphate + beta-D-GlcNAc-(1-&gt;4)-Mur2Ac(oyl-L-Ala-gamma-D-Glu-L-Lys-D-Ala-D-Ala)-di-trans,octa-cis-undecaprenyl diphosphate = [GlcNAc-(1-&gt;4)-Mur2Ac(oyl-L-Ala-gamma-D-Glu-L-Lys-D-Ala-D-Ala)](n+1)-di-trans,octa-cis-undecaprenyl diphosphate + di-trans,octa-cis-undecaprenyl diphosphate + H(+). It functions in the pathway cell wall biogenesis; peptidoglycan biosynthesis. Its function is as follows. Peptidoglycan polymerase that catalyzes glycan chain elongation from lipid-linked precursors. This chain is Biosynthetic peptidoglycan transglycosylase, found in Azoarcus sp. (strain BH72).